Reading from the N-terminus, the 596-residue chain is Aspartate--tRNA(Asp/Asn) ligase (596 aa).

L-aspartate is bound at residue glutamate 172. The aspartate stretch occupies residues 196–199; it reads QLFK. Arginine 218 serves as a coordination point for L-aspartate. ATP-binding positions include 218-220 and glutamine 227; that span reads RDE. Histidine 455 is an L-aspartate binding site. Glutamate 489 is a binding site for ATP. Arginine 496 is an L-aspartate binding site. 541-544 serves as a coordination point for ATP; the sequence is GLDR.

Belongs to the class-II aminoacyl-tRNA synthetase family. Type 1 subfamily. As to quaternary structure, homodimer.

It is found in the cytoplasm. The catalysed reaction is tRNA(Asx) + L-aspartate + ATP = L-aspartyl-tRNA(Asx) + AMP + diphosphate. Functionally, aspartyl-tRNA synthetase with relaxed tRNA specificity since it is able to aspartylate not only its cognate tRNA(Asp) but also tRNA(Asn). Reaction proceeds in two steps: L-aspartate is first activated by ATP to form Asp-AMP and then transferred to the acceptor end of tRNA(Asp/Asn). This Bordetella avium (strain 197N) protein is Aspartate--tRNA(Asp/Asn) ligase.